We begin with the raw amino-acid sequence, 315 residues long: Cross-pathway control WD-repeat protein 2 (315 aa).

7 WD repeats span residues 14–54, 62–101, 104–144, 147–188, 191–230, 232–270, and 282–315; these read GHKG…DSYG, GHNH…TTRR, GHTS…YDIK, CHTE…LKTN, GHTG…HLYS, EAGD…IVDE, and GRQP…TVTS.

Belongs to the WD repeat G protein beta family. Ribosomal protein RACK1 subfamily.

Its function is as follows. Component of the ribosome, a large ribonucleoprotein complex responsible for the synthesis of proteins in the cell. The small ribosomal subunit (SSU) binds messenger RNAs (mRNAs) and translates the encoded message by selecting cognate aminoacyl-transfer RNA (tRNA) molecules. The large subunit (LSU) contains the ribosomal catalytic site termed the peptidyl transferase center (PTC), which catalyzes the formation of peptide bonds, thereby polymerizing the amino acids delivered by tRNAs into a polypeptide chain. The nascent polypeptides leave the ribosome through a tunnel in the LSU and interact with protein factors that function in enzymatic processing, targeting, and the membrane insertion of nascent chains at the exit of the ribosomal tunnel. Plays in important role in the regulation of vegetative growth and fruiting body development. Especially, positively regulates the expression of genes involved in fruiting body development such as FVFD30 and FVFD16, as well as genes encoding for lectins and hydrophobins. Also regulates the expression of genes involved in cAMP signaling pathway. This chain is Cross-pathway control WD-repeat protein 2, found in Flammulina velutipes (Agaricus velutipes).